Here is a 159-residue protein sequence, read N- to C-terminus: Protein-export protein SecB (159 aa).

This sequence belongs to the SecB family. As to quaternary structure, homotetramer, a dimer of dimers. One homotetramer interacts with 1 SecA dimer.

The protein resides in the cytoplasm. In terms of biological role, one of the proteins required for the normal export of preproteins out of the cell cytoplasm. It is a molecular chaperone that binds to a subset of precursor proteins, maintaining them in a translocation-competent state. It also specifically binds to its receptor SecA. This is Protein-export protein SecB from Rhizobium etli (strain CIAT 652).